We begin with the raw amino-acid sequence, 407 residues long: Pyridinium-3,5-bisthiocarboxylic acid mononucleotide nickel insertion protein (407 aa).

The protein belongs to the LarC family.

The enzyme catalyses Ni(II)-pyridinium-3,5-bisthiocarboxylate mononucleotide = pyridinium-3,5-bisthiocarboxylate mononucleotide + Ni(2+). Its function is as follows. Involved in the biosynthesis of a nickel-pincer cofactor ((SCS)Ni(II) pincer complex). Binds Ni(2+), and functions in nickel delivery to pyridinium-3,5-bisthiocarboxylic acid mononucleotide (P2TMN), to form the mature cofactor. Is thus probably required for the activation of nickel-pincer cofactor-dependent enzymes. This Acetivibrio thermocellus (strain ATCC 27405 / DSM 1237 / JCM 9322 / NBRC 103400 / NCIMB 10682 / NRRL B-4536 / VPI 7372) (Clostridium thermocellum) protein is Pyridinium-3,5-bisthiocarboxylic acid mononucleotide nickel insertion protein.